We begin with the raw amino-acid sequence, 669 residues long: MGSNSSRIGDLPKNQYLKKLSGTESISENDPFWNQLLSFSFPAPTSSTELKLLEEATISVCRSLVENNPRTGNLGALIKVFLSRTKELKLSAECQNHIFIWQTHNALFIICCLLKVFICQMSEEELQLHFTYEEKSPGNYSSDSEDLLEELLCCLMQLITDIPLLDITYEISVEAISTMVVFLSCQLFHKEVLRQSISHKYLMRGPCLPYTSKLVKTLLYNFIRQEKPPPPGAHVFPQQSDGGGLLYGLASGVATGLWTVFTLGGVGSKVAASPELSSPLANQSLLLLLVLANLTDASDAPNPYRQAIMSFKNTQDSSPFPPLIPHAFQINFNSLYTALCEQQTSDQATLLLYTLLHQNSNIRTYMLARTDMENLVLPILEILYHVEERNSHHVYMALIILLILTEDDGFNRSIHEVILKNITWYSERVLTEISLGSLLILVVIRTIQYNMTRTRDKYLHTNCLAALANMSAQFRSLHQYAAQRIISLFSLLSKKHNKVLEQATQSLRGSLSSNDVPLPDYAQDLNVIEEVIRMMLEIINSCLTNSLHHNPNLVYALLYKRDLFEQFRTHPSFQDIMQNIDLVITFFSSRLLQAGAELSVERVLEIIKQGVVALPKDRLKKFPELKFKYVEEEQPEEFFIPYVWSLVYNSAVGLYWNPQDIQLFTMDSD.

G2 carries N-myristoyl glycine lipidation.

This sequence belongs to the dymeclin family. Interacts with GOLM1 and PPIB. Myristoylated in vitro; myristoylation is not essential for protein targeting to Golgi compartment.

It localises to the cytoplasm. The protein localises to the golgi apparatus. It is found in the membrane. Its function is as follows. Necessary for correct organization of Golgi apparatus. Involved in bone development. This chain is Dymeclin (DYM), found in Pongo abelii (Sumatran orangutan).